The following is a 172-amino-acid chain: Translocon-associated protein subunit delta (172 aa).

A signal peptide spans 1-23; the sequence is MAAMASFGALALLLLSGLSCCSE. The Lumenal segment spans residues 24–143; the sequence is ACLEPQITPS…SVDHRGTWNG (120 aa). Cys-25 and Cys-56 are disulfide-bonded. Lys-72 is covalently cross-linked (Glycyl lysine isopeptide (Lys-Gly) (interchain with G-Cter in ubiquitin)). The helical transmembrane segment at 144 to 164 threads the bilayer; that stretch reads PWVSTEVLAAVIGIVIYYLAF. Residues 165-172 are Cytoplasmic-facing; sequence SAKSHIQA.

The protein belongs to the TRAP-delta family. As to quaternary structure, heterotetramer of TRAP-alpha, TRAP-beta, TRAP-delta and TRAP-gamma.

It localises to the endoplasmic reticulum membrane. In terms of biological role, TRAP proteins are part of a complex whose function is to bind calcium to the ER membrane and thereby regulate the retention of ER resident proteins. The sequence is that of Translocon-associated protein subunit delta (Ssr4) from Mus musculus (Mouse).